The following is a 118-amino-acid chain: Cell division protein FtsB (118 aa).

The Cytoplasmic portion of the chain corresponds to 1–3 (MRL). The chain crosses the membrane as a helical span at residues 4-21 (LFLVLLVLLGLIQYPLWL). Topologically, residues 22–118 (GKGGWFKVWD…PRPPATPPRR (97 aa)) are periplasmic. The stretch at 28 to 62 (KVWDLQRQVAEQRETNDGLRARNTALEAEVRDLAT) forms a coiled coil. The disordered stretch occupies residues 88-118 (LPPGTPLPSDNSTPQASALSKPRPPATPPRR). Over residues 95–105 (PSDNSTPQASA) the composition is skewed to polar residues. Positions 109–118 (PRPPATPPRR) are enriched in pro residues.

It belongs to the FtsB family. As to quaternary structure, part of a complex composed of FtsB, FtsL and FtsQ.

Its subcellular location is the cell inner membrane. Functionally, essential cell division protein. May link together the upstream cell division proteins, which are predominantly cytoplasmic, with the downstream cell division proteins, which are predominantly periplasmic. This is Cell division protein FtsB from Bordetella bronchiseptica (strain ATCC BAA-588 / NCTC 13252 / RB50) (Alcaligenes bronchisepticus).